Here is a 379-residue protein sequence, read N- to C-terminus: Putative acetyl-CoA C-acetyltransferase VraB (379 aa).

Cys-86 functions as the Acyl-thioester intermediate in the catalytic mechanism. His-338 (proton acceptor) is an active-site residue.

This sequence belongs to the thiolase-like superfamily. Thiolase family.

The sequence is that of Putative acetyl-CoA C-acetyltransferase VraB (vraB) from Staphylococcus aureus (strain COL).